A 67-amino-acid chain; its full sequence is uncharacterized protein (67 aa).

This is an uncharacterized protein from Acidianus sp. F28 (AFV-2).